The sequence spans 911 residues: Nitrate reductase [NADH], clone PBNBR1412 (911 aa).

The tract at residues 53–72 (NDAVDDSYDSSDDEDESHNR) is disordered. Over residues 56 to 68 (VDDSYDSSDDEDE) the composition is skewed to acidic residues. Cysteine 191 is a binding site for Mo-molybdopterin. Positions 539 to 614 (AKMYSMSEVR…LEDYRIGELI (76 aa)) constitute a Cytochrome b5 heme-binding domain. Heme contacts are provided by histidine 574 and histidine 597. The FAD-binding FR-type domain occupies 654-766 (REKVPVTLIE…KGPLGHIEYL (113 aa)). FAD-binding positions include 706–709 (RAYT), 723–727 (VVKVY), phenylalanine 728, phenylalanine 735, 740–742 (LMS), and threonine 793.

The protein belongs to the nitrate reductase family. In terms of assembly, homodimer. FAD serves as cofactor. It depends on heme as a cofactor. The cofactor is Mo-molybdopterin.

The enzyme catalyses nitrite + NAD(+) + H2O = nitrate + NADH + H(+). Nitrate reductase is a key enzyme involved in the first step of nitrate assimilation in plants, fungi and bacteria. The chain is Nitrate reductase [NADH], clone PBNBR1412 (NIA2) from Brassica napus (Rape).